We begin with the raw amino-acid sequence, 627 residues long: MACPF domain-containing protein At1g14780 (627 aa).

The MACPF domain occupies 1-339 (MSRDGGDVIE…PPLMDLQYFL (339 aa)).

Belongs to the complement C6/C7/C8/C9 (TC 1.C.39) family.

Negatively controls the salicylic acid (SA)-mediated pathway of programmed cell death in plant immunity. The polypeptide is MACPF domain-containing protein At1g14780 (Arabidopsis thaliana (Mouse-ear cress)).